The chain runs to 2063 residues: Nuclear receptor coactivator 6 (2063 aa).

Positions 1 to 928 (MVLDDLPNLE…PPRKKKNSQQ (928 aa)) are TBP/GTF2A-binding region. Positions 1–1057 (MVLDDLPNLE…LPVSQNVHPP (1057 aa)) are CREBBP-binding region. Positions 1 to 1310 (MVLDDLPNLE…QTHKLDSVVV (1310 aa)) are NCOA1-binding region. Asymmetric dimethylarginine is present on arginine 95. Disordered stretches follow at residues 184–251 (IPPG…VNRQ), 281–549 (QQQQ…APQL), and 789–811 (RPPGPSPHMAQQHGDPATTANND). Residues 281 to 300 (QQQQQLQARPPQQHQQQQPQ) show a composition bias toward low complexity. Composition is skewed to polar residues over residues 353 to 368 (MQQQLQARPSLATVQT), 379 to 406 (GSQQASQAHTNFPQMSNPGQFTAPQMKS), 417 to 453 (PLQQPHLTNKSPASSPSSFQQGSPASSPTVNQTQQQM), 462 to 502 (PLPQ…QGPQ), and 522 to 549 (GQANPNFMQGQVPSTTATTPGNSGAPQL). The interval 773–927 (VNNSPSQVMG…KPPRKKKNSQ (155 aa)) is NCOA6IP-binding region. Residue serine 884 is modified to Phosphoserine; by MAPK; in vitro. An LXXLL motif 1 motif is present at residues 887–891 (LVNLL). Disordered stretches follow at residues 899–1278 (HFGV…LNPT), 1310–1353 (VNSG…KAPK), and 1448–1474 (EVKMVVPEDQSKKDGQPSDPNKLPSVE). Residues 903–912 (NNKQNNTNAN) show a composition bias toward low complexity. Residues 913–925 (KPKKKKPPRKKKN) show a composition bias toward basic residues. Residues 982–992 (PLQQMPPQLMQ) are compositionally biased toward low complexity. Residues 995 to 1020 (APPPQPPQQQPQPQLPQQQQPPPPSQ) show a composition bias toward pro residues. A compositionally biased stretch (low complexity) spans 1021 to 1041 (PQSQQQQQQQQQMMMMLMMQQ). 2 positions are modified to asymmetric dimethylarginine: arginine 1047 and arginine 1058. Polar residues predominate over residues 1063–1075 (PDSQRMPMQQSGS). Residue arginine 1096 is modified to Asymmetric dimethylarginine. Polar residues-rich tracts occupy residues 1104-1125 (PLGSNSRKMVYQESPQNPSSSP), 1173-1191 (LSATQGATPQQPPVNSLPS), and 1202-1214 (APTQTSRPKTPNR). A compositionally biased stretch (pro residues) spans 1219–1232 (PYYPQTPNNRPPST). Polar residues predominate over residues 1310–1320 (VNSGKQSNSGA). The segment covering 1322-1345 (KRASPSNSRRSSPGSSRKTTPSPG) has biased composition (low complexity). The LXXLL motif 2 signature appears at 1491–1495 (LSQLL). The tract at residues 1641–2063 (SEGQSAAQSN…AVQSKRRKSK (423 aa)) is EP300/CRSP3-binding region. The interval 1738-1820 (ATPVQLPSPP…VSSSKGKGKV (83 aa)) is disordered. A compositionally biased stretch (low complexity) spans 1750–1763 (SSPVVPSHPPVQQV). Residues 1773 to 1798 (PQVNTSADQNTLPSSQSTTMVSPLLT) show a composition bias toward polar residues. Positions 1799 to 1815 (NSPGSSGNRRSPVSSSK) are enriched in low complexity. An N6-acetyllysine mark is found at lysine 1819 and lysine 1822. 2 disordered regions span residues 1837 to 1908 (GSLE…LPGG) and 1995 to 2063 (IVSG…RKSK). A compositionally biased stretch (basic and acidic residues) spans 2002-2011 (EPKEIVEKSK). Serine 2018 carries the phosphoserine modification.

As to quaternary structure, monomer and homodimer. Interacts with RBM39. Interacts in vitro with the basal transcription factors GTF2A and TBP, suggesting an autonomous transactivation function. Interacts with NCOA1, CRSP3, RBM14, the histone acetyltransferases EP300 and CREBBP, and with the methyltransferases NCOA6IP and PRMT2/HRMT1L1. Component of the MLL2/3 complex (also named ASCOM complex), at least composed of KMT2D/MLL2 or KMT2C/MLL3, ASH2L, RBBP5, WDR5, NCOA6, DPY30, KDM6A, PAXIP1/PTIP, PAGR1 and alpha- and beta-tubulin. Interacts with ZNF335; may enhance ligand-dependent transcriptional activation by nuclear hormone receptors. In terms of processing, phosphorylated by PRKDC. Phosphorylation on Ser-884 leads to a strong decrease in binding to ESR1 and ESR2. In terms of tissue distribution, ubiquitous. Highly expressed in brain, prostate, testis and ovary; weakly expressed in lung, thymus and small intestine.

It is found in the nucleus. In terms of biological role, nuclear receptor coactivator that directly binds nuclear receptors and stimulates the transcriptional activities in a hormone-dependent fashion. Coactivates expression in an agonist- and AF2-dependent manner. Involved in the coactivation of different nuclear receptors, such as for steroids (GR and ERs), retinoids (RARs and RXRs), thyroid hormone (TRs), vitamin D3 (VDR) and prostanoids (PPARs). Probably functions as a general coactivator, rather than just a nuclear receptor coactivator. May also be involved in the coactivation of the NF-kappa-B pathway. May coactivate expression via a remodeling of chromatin and its interaction with histone acetyltransferase proteins. The sequence is that of Nuclear receptor coactivator 6 (NCOA6) from Homo sapiens (Human).